A 224-amino-acid polypeptide reads, in one-letter code: LexA repressor (224 aa).

A DNA-binding region (H-T-H motif) is located at residues 31–51 (RAEIAAELGFKSANAAEEHLQ). Active-site for autocatalytic cleavage activity residues include S142 and K179.

The protein belongs to the peptidase S24 family. As to quaternary structure, homodimer.

It carries out the reaction Hydrolysis of Ala-|-Gly bond in repressor LexA.. Its function is as follows. Represses a number of genes involved in the response to DNA damage (SOS response), including recA and lexA. In the presence of single-stranded DNA, RecA interacts with LexA causing an autocatalytic cleavage which disrupts the DNA-binding part of LexA, leading to derepression of the SOS regulon and eventually DNA repair. The polypeptide is LexA repressor (Verminephrobacter eiseniae (strain EF01-2)).